The sequence spans 461 residues: Proton extrusion protein PxcA (461 aa).

The next 4 membrane-spanning stretches (helical) occupy residues Phe244–Val264, Leu339–Gly359, Ile386–Val406, and Phe421–Ile441.

It belongs to the CemA family.

It is found in the cell inner membrane. Required for H(+) efflux immediately after light irradiation to form a rapid H(+) concentration gradient across the thylakoid membranes. Together with PxcL, contributes to transient H(+) uptake following dark to light transition. The polypeptide is Proton extrusion protein PxcA (Thermosynechococcus vestitus (strain NIES-2133 / IAM M-273 / BP-1)).